A 233-amino-acid chain; its full sequence is Large ribosomal subunit protein uL1 (233 aa).

The protein belongs to the universal ribosomal protein uL1 family. In terms of assembly, part of the 50S ribosomal subunit.

In terms of biological role, binds directly to 23S rRNA. The L1 stalk is quite mobile in the ribosome, and is involved in E site tRNA release. Protein L1 is also a translational repressor protein, it controls the translation of the L11 operon by binding to its mRNA. This Syntrophomonas wolfei subsp. wolfei (strain DSM 2245B / Goettingen) protein is Large ribosomal subunit protein uL1.